Reading from the N-terminus, the 198-residue chain is Putative 3-methyladenine DNA glycosylase (198 aa).

The protein belongs to the DNA glycosylase MPG family.

This Natranaerobius thermophilus (strain ATCC BAA-1301 / DSM 18059 / JW/NM-WN-LF) protein is Putative 3-methyladenine DNA glycosylase.